A 72-amino-acid polypeptide reads, in one-letter code: MNNSMINPAITDLLKKVDNRYSLVVVTSKRARQLVDGDEALLESDIVKPVSLAIEEVNDGLISYETIREGIK.

The protein belongs to the RNA polymerase subunit omega family. As to quaternary structure, the RNAP catalytic core consists of 2 alpha, 1 beta, 1 beta' and 1 omega subunit. When a sigma factor is associated with the core the holoenzyme is formed, which can initiate transcription.

It catalyses the reaction RNA(n) + a ribonucleoside 5'-triphosphate = RNA(n+1) + diphosphate. Functionally, promotes RNA polymerase assembly. Latches the N- and C-terminal regions of the beta' subunit thereby facilitating its interaction with the beta and alpha subunits. The protein is DNA-directed RNA polymerase subunit omega (rpoZ) of Clostridium tetani (strain Massachusetts / E88).